A 661-amino-acid polypeptide reads, in one-letter code: DNA-directed RNA polymerase subunit beta' (661 aa).

Zn(2+) is bound by residues Cys-69, Cys-71, Cys-87, and Cys-90. The Mg(2+) site is built by Asp-489, Asp-491, and Asp-493.

This sequence belongs to the RNA polymerase beta' chain family. RpoC1 subfamily. In terms of assembly, in plastids the minimal PEP RNA polymerase catalytic core is composed of four subunits: alpha, beta, beta', and beta''. When a (nuclear-encoded) sigma factor is associated with the core the holoenzyme is formed, which can initiate transcription. Requires Mg(2+) as cofactor. Zn(2+) is required as a cofactor.

The protein resides in the plastid. The protein localises to the chloroplast. It carries out the reaction RNA(n) + a ribonucleoside 5'-triphosphate = RNA(n+1) + diphosphate. Functionally, DNA-dependent RNA polymerase catalyzes the transcription of DNA into RNA using the four ribonucleoside triphosphates as substrates. This is DNA-directed RNA polymerase subunit beta' from Chaetosphaeridium globosum (Charophycean green alga).